The chain runs to 109 residues: Phosphoribosyl-AMP cyclohydrolase (109 aa).

Residue Asp-80 participates in Mg(2+) binding. Cys-81 lines the Zn(2+) pocket. Residues Asp-82 and Asp-84 each contribute to the Mg(2+) site. Zn(2+)-binding residues include Cys-97 and Cys-104.

It belongs to the PRA-CH family. As to quaternary structure, homodimer. Mg(2+) serves as cofactor. It depends on Zn(2+) as a cofactor.

The protein resides in the cytoplasm. It catalyses the reaction 1-(5-phospho-beta-D-ribosyl)-5'-AMP + H2O = 1-(5-phospho-beta-D-ribosyl)-5-[(5-phospho-beta-D-ribosylamino)methylideneamino]imidazole-4-carboxamide. Its pathway is amino-acid biosynthesis; L-histidine biosynthesis; L-histidine from 5-phospho-alpha-D-ribose 1-diphosphate: step 3/9. Its function is as follows. Catalyzes the hydrolysis of the adenine ring of phosphoribosyl-AMP. This Clostridium botulinum (strain Alaska E43 / Type E3) protein is Phosphoribosyl-AMP cyclohydrolase.